Here is a 212-residue protein sequence, read N- to C-terminus: Thiamine-phosphate synthase (212 aa).

4-amino-2-methyl-5-(diphosphooxymethyl)pyrimidine is bound by residues 40–44 (QFREK) and N75. Mg(2+)-binding residues include D76 and D95. S113 contacts 4-amino-2-methyl-5-(diphosphooxymethyl)pyrimidine. 139–141 (TTS) provides a ligand contact to 2-[(2R,5Z)-2-carboxy-4-methylthiazol-5(2H)-ylidene]ethyl phosphate. K142 is a binding site for 4-amino-2-methyl-5-(diphosphooxymethyl)pyrimidine. Residues G171 and 191-192 (IS) each bind 2-[(2R,5Z)-2-carboxy-4-methylthiazol-5(2H)-ylidene]ethyl phosphate.

This sequence belongs to the thiamine-phosphate synthase family. Mg(2+) serves as cofactor.

The catalysed reaction is 2-[(2R,5Z)-2-carboxy-4-methylthiazol-5(2H)-ylidene]ethyl phosphate + 4-amino-2-methyl-5-(diphosphooxymethyl)pyrimidine + 2 H(+) = thiamine phosphate + CO2 + diphosphate. It carries out the reaction 2-(2-carboxy-4-methylthiazol-5-yl)ethyl phosphate + 4-amino-2-methyl-5-(diphosphooxymethyl)pyrimidine + 2 H(+) = thiamine phosphate + CO2 + diphosphate. The enzyme catalyses 4-methyl-5-(2-phosphooxyethyl)-thiazole + 4-amino-2-methyl-5-(diphosphooxymethyl)pyrimidine + H(+) = thiamine phosphate + diphosphate. Its pathway is cofactor biosynthesis; thiamine diphosphate biosynthesis; thiamine phosphate from 4-amino-2-methyl-5-diphosphomethylpyrimidine and 4-methyl-5-(2-phosphoethyl)-thiazole: step 1/1. Its function is as follows. Condenses 4-methyl-5-(beta-hydroxyethyl)thiazole monophosphate (THZ-P) and 2-methyl-4-amino-5-hydroxymethyl pyrimidine pyrophosphate (HMP-PP) to form thiamine monophosphate (TMP). The sequence is that of Thiamine-phosphate synthase from Staphylococcus saprophyticus subsp. saprophyticus (strain ATCC 15305 / DSM 20229 / NCIMB 8711 / NCTC 7292 / S-41).